Consider the following 262-residue polypeptide: G patch domain-containing protein 11 (262 aa).

3 stretches are compositionally biased toward basic and acidic residues: residues 39 to 61, 114 to 127, and 136 to 165; these read LHKE…ESRE, EEVK…ELQN, and QHLE…DLRK. Disordered stretches follow at residues 39 to 71 and 88 to 169; these read LHKE…IGSQ and GLGK…SQRA. Residues 41-62 adopt a coiled-coil conformation; it reads KEKDIQNRQKSFKEQEKESREA. The G-patch domain occupies 70–116; that stretch reads SQNKGFALLQKMGYKAGQGLGKEGAGRVEPVPLNIKTDRGGIGMEEV.

The protein belongs to the GPATCH11 family.

It localises to the chromosome. It is found in the centromere. Its subcellular location is the kinetochore. The sequence is that of G patch domain-containing protein 11 (gpatch11) from Danio rerio (Zebrafish).